Consider the following 392-residue polypeptide: Probable nucleoredoxin 3 (392 aa).

Thioredoxin domains are found at residues 17-171 (LYSI…DSKR) and 177-326 (EKLL…ELKA).

The protein belongs to the nucleoredoxin family.

It carries out the reaction [protein]-dithiol + NAD(+) = [protein]-disulfide + NADH + H(+). The catalysed reaction is [protein]-dithiol + NADP(+) = [protein]-disulfide + NADPH + H(+). Probable thiol-disulfide oxidoreductase that may participate in various redox reactions. The polypeptide is Probable nucleoredoxin 3 (Arabidopsis thaliana (Mouse-ear cress)).